Reading from the N-terminus, the 495-residue chain is Probable cytosol aminopeptidase (495 aa).

Lysine 267 and aspartate 272 together coordinate Mn(2+). Lysine 279 is a catalytic residue. Mn(2+)-binding residues include aspartate 290, aspartate 349, and glutamate 351. Arginine 353 is a catalytic residue.

The protein belongs to the peptidase M17 family. Mn(2+) serves as cofactor.

It is found in the cytoplasm. It catalyses the reaction Release of an N-terminal amino acid, Xaa-|-Yaa-, in which Xaa is preferably Leu, but may be other amino acids including Pro although not Arg or Lys, and Yaa may be Pro. Amino acid amides and methyl esters are also readily hydrolyzed, but rates on arylamides are exceedingly low.. The enzyme catalyses Release of an N-terminal amino acid, preferentially leucine, but not glutamic or aspartic acids.. Its function is as follows. Presumably involved in the processing and regular turnover of intracellular proteins. Catalyzes the removal of unsubstituted N-terminal amino acids from various peptides. The protein is Probable cytosol aminopeptidase of Histophilus somni (strain 129Pt) (Haemophilus somnus).